Here is a 153-residue protein sequence, read N- to C-terminus: UPF0735 ACT domain-containing protein FN1487 (153 aa).

Residues Ser-76–Ser-152 form the ACT domain.

The protein belongs to the UPF0735 family.

In Fusobacterium nucleatum subsp. nucleatum (strain ATCC 25586 / DSM 15643 / BCRC 10681 / CIP 101130 / JCM 8532 / KCTC 2640 / LMG 13131 / VPI 4355), this protein is UPF0735 ACT domain-containing protein FN1487.